We begin with the raw amino-acid sequence, 400 residues long: WD repeat and FYVE domain-containing protein 2 (400 aa).

6 WD repeats span residues 22-61 (GSQEVVNMAVIVPKEEGVISVSEDRTVRVWLKRDSGQYWP), 66-105 (AMPSPCSCMSFNPETRRLSIGLDNGTISEFILSEDYNKMT), 112-150 (AHQSRVTMILFVLELEWVLSTGQDKQFAWHCSESGQRLG), 153-192 (RTSAVASGLQFDVETRHVFIGDHSGQVTILKLEQENCTLV), 197-236 (GHTGGVTALCWDPVQRVLFSGSSDHSVIMWDIGGRKGTAI), and 240-279 (GHNDRVQALSYAQHTRQLISCGGDGGIVVWNMDVERQETP). The FYVE-type zinc finger occupies 281–352 (WLDSDSCQKC…VCDSCHEAIT (72 aa)). Zn(2+)-binding residues include Cys-287, Cys-290, Cys-314, Cys-317, Cys-322, Cys-325, Cys-344, and Cys-347. A WD 7 repeat occupies 364-399 (DSKHNIVHVHFDATRGWLLTSGTDKVIKLWDMTPVV).

Homodimer. Interacts (via WD repeats 1-3) with AKT1, AKT2, PRKCZ and PRKCI. Interacts with VAMP2. Forms a complex with VAMP2 and PRKCZ. Interacts with FOXO1. Forms a complex with AKT1 and FOXO1.

It localises to the endosome. The protein resides in the early endosome. Its subcellular location is the cytoplasm. Its function is as follows. Acts in an adapter protein-like fashion to mediate the interaction between the kinase PRKCZ and its substrate VAMP2 and increases the PRKCZ-dependent phosphorylation of VAMP2. Positively regulates adipocyte differentiation, by facilitating the phosphorylation and thus inactivation of the anti-adipogenetic transcription factor FOXO1 by the kinase AKT1. Plays a role in endosomal control of AKT2 signaling; required for insulin-stimulated AKT2 phosphorylation and glucose uptake and insulin-stimulated phosphorylation of AKT2 substrates. Participates in transferrin receptor endocytosis. The protein is WD repeat and FYVE domain-containing protein 2 (WDFY2) of Homo sapiens (Human).